A 422-amino-acid chain; its full sequence is Gamma-glutamyl phosphate reductase (422 aa).

It belongs to the gamma-glutamyl phosphate reductase family.

Its subcellular location is the cytoplasm. It carries out the reaction L-glutamate 5-semialdehyde + phosphate + NADP(+) = L-glutamyl 5-phosphate + NADPH + H(+). It functions in the pathway amino-acid biosynthesis; L-proline biosynthesis; L-glutamate 5-semialdehyde from L-glutamate: step 2/2. Functionally, catalyzes the NADPH-dependent reduction of L-glutamate 5-phosphate into L-glutamate 5-semialdehyde and phosphate. The product spontaneously undergoes cyclization to form 1-pyrroline-5-carboxylate. The chain is Gamma-glutamyl phosphate reductase from Chloroflexus aurantiacus (strain ATCC 29366 / DSM 635 / J-10-fl).